Reading from the N-terminus, the 272-residue chain is R-spondin-3 (272 aa).

The first 21 residues, 1–21 (MHLRLISWLFIILNFMEYIGS), serve as a signal peptide directing secretion. FU repeat units lie at residues 35–86 (PNVS…GYYG) and 92–135 (INKC…GLEA). N-linked (GlcNAc...) asparagine glycosylation is present at asparagine 36. 11 disulfides stabilise this stretch: cysteine 41–cysteine 48, cysteine 45–cysteine 54, cysteine 57–cysteine 76, cysteine 80–cysteine 95, cysteine 98–cysteine 105, cysteine 102–cysteine 111, cysteine 114–cysteine 125, cysteine 129–cysteine 142, cysteine 148–cysteine 190, cysteine 159–cysteine 166, and cysteine 199–cysteine 206. In terms of domain architecture, TSP type-1 spans 147 to 207 (HCEVSEWNPW…KCTVQRKKCQ (61 aa)). Residues 201-272 (VQRKKCQKGE…QKSVSVSTVH (72 aa)) form a disordered region. The segment covering 213-223 (KKGRERKRKKP) has biased composition (basic residues). Residues 224–252 (NKGESKEAIPDSKSLESSKEIPEQRENKQ) show a composition bias toward basic and acidic residues.

This sequence belongs to the R-spondin family. In terms of assembly, interacts with the extracellular domain of FZD8 and LRP6. It however does not form a ternary complex with FZD8 and LRP6. Interacts with WNT1. Binds heparin. Interacts with LGR4, LGR5 and LGR6. Ubiquitously expressed. Expressed at higher level in placenta, small intestine, fetal thymus and lymph node. Highly expressed in endothelial cells.

The protein resides in the secreted. Its function is as follows. Activator of the canonical Wnt signaling pathway by acting as a ligand for LGR4-6 receptors, which acts as a key regulator of angiogenesis. Upon binding to LGR4-6 (LGR4, LGR5 or LGR6), LGR4-6 associate with phosphorylated LRP6 and frizzled receptors that are activated by extracellular Wnt receptors, triggering the canonical Wnt signaling pathway to increase expression of target genes. Also regulates the canonical Wnt/beta-catenin-dependent pathway and non-canonical Wnt signaling by acting as an inhibitor of ZNRF3, an important regulator of the Wnt signaling pathway. Acts as a ligand for frizzled FZD8 and LRP6. May negatively regulate the TGF-beta pathway. Acts as a key regulator of angiogenesis by controlling vascular stability and pruning: acts by activating the non-canonical Wnt signaling pathway in endothelial cells. Can also amplify Wnt signaling pathway independently of LGR4-6 receptors, possibly by acting as a direct antagonistic ligand to RNF43 and ZNRF3. This chain is R-spondin-3 (RSPO3), found in Homo sapiens (Human).